A 121-amino-acid polypeptide reads, in one-letter code: Large ribosomal subunit protein bL20 (121 aa).

The protein belongs to the bacterial ribosomal protein bL20 family.

Binds directly to 23S ribosomal RNA and is necessary for the in vitro assembly process of the 50S ribosomal subunit. It is not involved in the protein synthesizing functions of that subunit. This is Large ribosomal subunit protein bL20 from Ruegeria sp. (strain TM1040) (Silicibacter sp.).